We begin with the raw amino-acid sequence, 135 residues long: Small ribosomal subunit protein bS16m (135 aa).

A mitochondrion-targeting transit peptide spans 1 to 34 (MVQLTTVLCKAYRGGHLTIRLALGGCTNRPFYRI). A Phosphothreonine modification is found at T130.

It belongs to the bacterial ribosomal protein bS16 family. In terms of assembly, component of the mitochondrial ribosome small subunit (28S) which comprises a 12S rRNA and about 30 distinct proteins.

It is found in the mitochondrion. The polypeptide is Small ribosomal subunit protein bS16m (MRPS16) (Bos taurus (Bovine)).